We begin with the raw amino-acid sequence, 389 residues long: Chalcone synthase 2 (389 aa).

Residue Cys-164 is part of the active site.

The protein belongs to the thiolase-like superfamily. Chalcone/stilbene synthases family.

The catalysed reaction is (E)-4-coumaroyl-CoA + 3 malonyl-CoA + 3 H(+) = 2',4,4',6'-tetrahydroxychalcone + 3 CO2 + 4 CoA. The protein operates within secondary metabolite biosynthesis; flavonoid biosynthesis. The primary product of this enzyme is 4,2',4',6'-tetrahydroxychalcone (also termed naringenin-chalcone or chalcone) which can under specific conditions spontaneously isomerize into naringenin. In Trifolium subterraneum (Subterranean clover), this protein is Chalcone synthase 2 (CHS2).